Reading from the N-terminus, the 80-residue chain is Large ribosomal subunit protein uL24 (80 aa).

A disordered region spans residues 53-80 (HMRPTQSNPQGSIIEREFPIHASNVKKS).

This sequence belongs to the universal ribosomal protein uL24 family. Part of the 50S ribosomal subunit.

In terms of biological role, one of two assembly initiator proteins, it binds directly to the 5'-end of the 23S rRNA, where it nucleates assembly of the 50S subunit. Its function is as follows. One of the proteins that surrounds the polypeptide exit tunnel on the outside of the subunit. The sequence is that of Large ribosomal subunit protein uL24 from Chlorobium luteolum (strain DSM 273 / BCRC 81028 / 2530) (Pelodictyon luteolum).